Consider the following 494-residue polypeptide: MRIPTYDFGSKFSVVQEVMRLQTVKHFLEPVLEPLIRKVVKEEVELALGKHLAGIKWICEKETHPLESRNLQLKFLNNLSLPVFTSARIEGDEGQAIRVGLIDPSTGQIFSSGPASSAKLEVFVVEGDFNSVSDWTDEDIRNNIVREREGKKPLLNGNVFAVLNDGIGVMDEISFTDNSSWTRSRKFRLGVRIVDQFDYVKIREAITESFVVRDHRGELYKKHHPPSLFDEVWRLEKIGKDGAFHRRLNLSNINTVKDFLTHFHLNSSKLRQVLGTGMSSKMWEITLDHARSCVLDSSVHVYQAPGFQKKTAVVFNVVAQVLGLLVDFQYIPAEKLSEIEKAQAEVMVIDALSHLNEVISYDDEVSMMRNVLNAPASQGSVAGIDYSGLSLTSLDGYGFVSSLHNTAECSGKHSDDVDMEVTPHGLYEDYDNLWNCSHILGLEEPQSELQSALDDFMSQKNASVGGKAHSKRWTKLFSVSRWLSVFKYVKLGKI.

The interval 1 to 62 (MRIPTYDFGS…AGIKWICEKE (62 aa)) is calmodulin-binding. Residues 132–252 (VSDWTDEDIR…AFHRRLNLSN (121 aa)) form a DNA-binding region.

Belongs to the plant ACBP60 protein family. As to quaternary structure, interacts with calmodulin (CaM). As to expression, expressed in stems, flowers and root.

The protein resides in the nucleus. Transcription activator that binds DNA in a sequence-specific manner, likely 5'-GAAATTTTGG-3', to promote the expression of target genes. The chain is Calmodulin-binding protein 60 A from Arabidopsis thaliana (Mouse-ear cress).